Consider the following 277-residue polypeptide: Probable ketoamine kinase HMPREF0351_12196 (277 aa).

An ATP-binding site is contributed by 84-86; sequence EWI. The active-site Proton acceptor is the aspartate 186.

The protein belongs to the fructosamine kinase family.

It catalyses the reaction N(6)-(D-ribulosyl)-L-lysine + ATP = N(6)-(3-O-phospho-D-ribulosyl)-L-lysine + ADP + H(+). It carries out the reaction N-(D-ribulosyl)-cadaverine + ATP = N-(3-O-phospho-D-ribulosyl)-cadaverine + ADP + H(+). The catalysed reaction is N(6)-(D-erythrulosyl)-L-lysine + ATP = N(6)-(3-O-phospho-D-erythrulosyl)-L-lysine + ADP + H(+). The enzyme catalyses N-(D-erythrulosyl)-cadaverine + ATP = N-(3-O-phospho-D-erythrulosyl)-cadaverine + ADP + H(+). It catalyses the reaction N(6)-D-ribulosyl-L-lysyl-[protein] + ATP = N(6)-(3-O-phospho-D-ribulosyl)-L-lysyl-[protein] + ADP + H(+). It carries out the reaction N(6)-(D-erythrulosyl)-L-lysyl-[protein] + ATP = N(6)-(3-O-phospho-D-erythrulosyl)-L-lysyl-[protein] + ADP + H(+). Functionally, ketoamine kinase that phosphorylates ketoamines, such as erythruloselysine, erythrulosecadaverine, ribuloselysine and ribulosecadaverine, on the third carbon of the sugar moiety to generate ketoamine 3-phosphate. Has higher activity on free lysine (erythruloselysine and ribuloselysine), than on ribuloselysine and erythruloselysine residues on glycated proteins. The protein is Probable ketoamine kinase HMPREF0351_12196 of Enterococcus faecium (strain ATCC BAA-472 / TX0016 / DO).